The following is a 655-amino-acid chain: Putative esterase (655 aa).

A helical membrane pass occupies residues 9-29; the sequence is VLSLTLIYISISIGFSVYFYV. 7 N-linked (GlcNAc...) asparagine; by host glycosylation sites follow: Asn71, Asn89, Asn101, Asn185, Asn386, Asn449, and Asn512. The active-site Charge relay system is His515. N-linked (GlcNAc...) asparagine; by host glycosylation is found at Asn527 and Asn597.

Belongs to the type-B carboxylesterase/lipase family.

Its subcellular location is the membrane. It catalyses the reaction a carboxylic ester + H2O = an alcohol + a carboxylate + H(+). The polypeptide is Putative esterase (Noctuidae (owlet moths)).